Consider the following 165-residue polypeptide: Large ribosomal subunit protein uL15 (165 aa).

Residues 1–44 (MSLNQLKAPRGANRAKKRVGRGQGSGLGKTAGRGGKGQKARSGN) form a disordered region. The span at 21-37 (RGQGSGLGKTAGRGGKG) shows a compositional bias: gly residues.

The protein belongs to the universal ribosomal protein uL15 family. As to quaternary structure, part of the 50S ribosomal subunit.

Its function is as follows. Binds to the 23S rRNA. The chain is Large ribosomal subunit protein uL15 from Anaeromyxobacter dehalogenans (strain 2CP-C).